A 134-amino-acid polypeptide reads, in one-letter code: Holo-[acyl-carrier-protein] synthase (134 aa).

Positions 8 and 59 each coordinate Mg(2+).

This sequence belongs to the P-Pant transferase superfamily. AcpS family. Mg(2+) serves as cofactor.

The protein localises to the cytoplasm. It catalyses the reaction apo-[ACP] + CoA = holo-[ACP] + adenosine 3',5'-bisphosphate + H(+). Transfers the 4'-phosphopantetheine moiety from coenzyme A to a Ser of acyl-carrier-protein. This chain is Holo-[acyl-carrier-protein] synthase, found in Zymomonas mobilis subsp. mobilis (strain ATCC 31821 / ZM4 / CP4).